Reading from the N-terminus, the 284-residue chain is Efem/EfeO family lipoprotein (284 aa).

A signal peptide spans 1 to 17; sequence MKKLTTLLLASTLLIAA. C18 carries the N-palmitoyl cysteine lipid modification. Residue C18 is the site of S-diacylglycerol cysteine attachment.

The protein belongs to the EfeM/EfeO family.

It localises to the cell membrane. In Staphylococcus aureus (strain MSSA476), this protein is Efem/EfeO family lipoprotein.